A 339-amino-acid polypeptide reads, in one-letter code: Phenylalanine--tRNA ligase alpha subunit (339 aa).

Glutamate 253 contacts Mg(2+).

The protein belongs to the class-II aminoacyl-tRNA synthetase family. Phe-tRNA synthetase alpha subunit type 1 subfamily. In terms of assembly, tetramer of two alpha and two beta subunits. Requires Mg(2+) as cofactor.

The protein resides in the cytoplasm. The catalysed reaction is tRNA(Phe) + L-phenylalanine + ATP = L-phenylalanyl-tRNA(Phe) + AMP + diphosphate + H(+). The polypeptide is Phenylalanine--tRNA ligase alpha subunit (Thioalkalivibrio sulfidiphilus (strain HL-EbGR7)).